Consider the following 1984-residue polypeptide: MAMLPPPGPQSFVHFTKQSLALIEQRISEEKAKEHKDEKKDDEEEGPKPSSDLEAGKQLPFIYGDIPPGMVSEPLEDLDPYYADKKTFIVLNKGKAIFRFNATPALYMLSPFSPLRRISIKILVHSLFSMLIMCTILTNCIFMTLSNPPEWTKNVEYTFTGIYTFESLIKILARGFCVGEFTFLRDPWNWLDFVVIVFAYLTEFVNLGNVSALRTFRVLRALKTISVIPGLKTIVGALIQSVKKLSDVMILTVFCLSVFALIGLQLFMGNLKHKCFRKELEENETLESIMNTAESEEELKKYFYYLEGSKDALLCGFSTDSGQCPEGYICVKAGRNPDYGYTSFDTFSWAFLALFRLMTQDYWENLYQQTLRAAGKTYMIFFVVVIFLGSFYLINLILAVVAMAYEEQNQANIEEAKQKELEFQQMLDRLKKEQEEAEAIAAAAAEFTSIGRSRIMGLSESSSETSRLSSKSAKERRNRRKKKKQKMSSGEEKGDDEKLSKSGSEESIRKKSFHLGVEGHHRTREKRLSTPNQSPLSIRGSLFSARRSSRTSLFSFKGRGRDLGSETEFADDEHSIFGDNESRRGSLFVPHRPRERRSSNISQASRSPPVLPVNGKMHSAVDCNGVVSLVDGPSALMLPNGQLLPEVIIDKATSDDSGTTNQMRKKRLSSSYFLSEDMLNDPHLRQRAMSRASILTNTVEELEESRQKCPPWWYRFAHTFLIWNCSPYWIKFKKLIYFIVMDPFVDLAITICIVLNTLFMAMEHHPMTEEFKNVLAVGNLIFTGIFAAEMVLKLIAMDPYEYFQVGWNIFDSLIVTLSLIELFLADVEGLSVLRSFRLLRVFKLAKSWPTLNMLIKIIGNSVGALGNLTLVLAIIVFIFAVVGMQLFGKSYKECVCKINVDCKLPRWHMNDFFHSFLIVFRVLCGEWIETMWDCMEVAGQTMCLIVYMMVMVIGNLVVLNLFLALLLSSFSSDNLTAIEEDTDANNLQIAVARIKRGINYVKQTLREFILKSFSKKPKGSKDTKRTADPNNKKENYISNRTLAEMSKDHNFLKEKDRISGYGSSLDKSFMDENDYQSFIHNPSLTVTVPIAPGESDLEIMNTEELSSDSDSDYSKEKRNRSSSSECSTVDNPLPGEEEAEAEPVNADEPEACFTDGCVRRFPCCQVNVDSGKGKVWWTIRKTCYRIVEHSWFESFIVLMILLSSGALAFEDIYIEKKKTIKIILEYADKIFTYIFILEMLLKWVAYGYKTYFTNAWCWLDFLIVDVSLVTLVANTLGYSDLGPIKSLRTLRALRPLRALSRFEGMRVVVNALIGAIPSIMNVLLVCLIFWLIFSIMGVNLFAGKFYECVNTTDGSRFPTSQVANRSECFALMNVSGNVRWKNLKVNFDNVGLGYLSLLQVATFKGWMDIMYAAVDSVNVNEQPKYEYSLYMYIYFVIFIIFGSFFTLNLFIGVIIDNFNQQKKKLGGQDIFMTEEQKKYYNAMKKLGSKKPQKPIPRPGNKFQGCIFDLVTNQAFDITIMVLICLNMVTMMVEKEGQTEYMDYVLHWINMVFIILFTGECVLKLISLRHYYFTVGWNIFDFVVVILSIVGMFLAEMIEKYFVSPTLFRVIRLARIGRILRLIKGAKGIRTLLFALMMSLPALFNIGLLLFLVMFIYAIFGMSNFAYVKKEAGINDMFNFETFGNSMICLFQITTSAGWDGLLAPILNSAPPDCDPKKVHPGSSVEGDCGNPSVGIFYFVSYIIISFLVVVNMYIAVILENFSVATEESTEPLSEDDFEMFYEVWEKFDPDATQFIEFCKLSDFAAALDPPLLIAKPNKVQLIAMDLPMVSGDRIHCLDILFAFTKRVLGEGGEMDSLRSQMEERFMSANPSKVSYEPITTTLKRKQEEVSATIIQRAYRRYRLRQHVKNISSIYIKDGDRDDDLPNKEDTVFDNVNENSSPEKTDVTASTISPPSYDSVTKPDQEKYETDKTEKEDKEKDESRK.

Topologically, residues 1 to 125 (MAMLPPPGPQ…RRISIKILVH (125 aa)) are cytoplasmic. Residues 26 to 39 (RISEEKAKEHKDEK) are compositionally biased toward basic and acidic residues. The segment at 26–55 (RISEEKAKEHKDEKKDDEEEGPKPSSDLEA) is disordered. An I repeat occupies 112 to 410 (FSPLRRISIK…VAMAYEEQNQ (299 aa)). Residues 126–145 (SLFSMLIMCTILTNCIFMTL) traverse the membrane as a helical segment. Residues 146–150 (SNPPE) lie on the Extracellular side of the membrane. The helical transmembrane segment at 151–172 (WTKNVEYTFTGIYTFESLIKIL) threads the bilayer. At 173–185 (ARGFCVGEFTFLR) the chain is on the cytoplasmic side. Residues 186-204 (DPWNWLDFVVIVFAYLTEF) traverse the membrane as a helical segment. Topologically, residues 205–210 (VNLGNV) are extracellular. N-linked (GlcNAc...) asparagine glycosylation is present at Asn-209. Residues 211–227 (SALRTFRVLRALKTISV) traverse the membrane as a helical segment. Over 228–241 (IPGLKTIVGALIQS) the chain is Cytoplasmic. A helical transmembrane segment spans residues 242-267 (VKKLSDVMILTVFCLSVFALIGLQLF). At 268–346 (MGNLKHKCFR…PDYGYTSFDT (79 aa)) the chain is on the extracellular side. Residues Cys-275 and Cys-324 are joined by a disulfide bond. The N-linked (GlcNAc...) asparagine glycan is linked to Asn-283. The pore-forming intramembrane region spans 347–363 (FSWAFLALFRLMTQDYW). Residues 364–376 (ENLYQQTLRAAGK) are Extracellular-facing. A helical transmembrane segment spans residues 377–402 (TYMIFFVVVIFLGSFYLINLILAVVA). Residues 403-744 (MAYEEQNQAN…LIYFIVMDPF (342 aa)) are Cytoplasmic-facing. Over residues 461 to 471 (SSSETSRLSSK) the composition is skewed to low complexity. Disordered stretches follow at residues 461 to 542 (SSSE…RGSL) and 576 to 609 (IFGD…RSPP). Basic residues predominate over residues 474-486 (KERRNRRKKKKQK). The span at 489–509 (SGEEKGDDEKLSKSGSEESIR) shows a compositional bias: basic and acidic residues. One copy of the II repeat lies at 725–988 (CSPYWIKFKK…EEDTDANNLQ (264 aa)). A helical membrane pass occupies residues 745–761 (VDLAITICIVLNTLFMA). The Extracellular portion of the chain corresponds to 762–770 (MEHHPMTEE). The helical transmembrane segment at 771 to 795 (FKNVLAVGNLIFTGIFAAEMVLKLI) threads the bilayer. The Cytoplasmic segment spans residues 796-804 (AMDPYEYFQ). Residues 805–821 (VGWNIFDSLIVTLSLIE) form a helical membrane-spanning segment. At 822-830 (LFLADVEGL) the chain is on the extracellular side. Residues 831–847 (SVLRSFRLLRVFKLAKS) form a helical membrane-spanning segment. The Cytoplasmic segment spans residues 848-864 (WPTLNMLIKIIGNSVGA). The chain crosses the membrane as a helical span at residues 865–887 (LGNLTLVLAIIVFIFAVVGMQLF). At 888-914 (GKSYKECVCKINVDCKLPRWHMNDFFH) the chain is on the extracellular side. An intrachain disulfide couples Cys-896 to Cys-902. Positions 915-927 (SFLIVFRVLCGEW) form an intramembrane region, pore-forming. Topologically, residues 928–939 (IETMWDCMEVAG) are extracellular. Cysteines 934 and 943 form a disulfide. The chain crosses the membrane as a helical span at residues 940–966 (QTMCLIVYMMVMVIGNLVVLNLFLALL). Residues 967 to 1185 (LSSFSSDNLT…WWTIRKTCYR (219 aa)) are Cytoplasmic-facing. Disordered regions lie at residues 1015–1040 (KKPK…ISNR) and 1103–1145 (EELS…EPVN). The segment covering 1019–1035 (GSKDTKRTADPNNKKEN) has biased composition (basic and acidic residues). Residues 1135–1145 (GEEEAEAEPVN) are compositionally biased toward acidic residues. The III repeat unit spans residues 1178–1486 (TIRKTCYRIV…KKYYNAMKKL (309 aa)). A helical membrane pass occupies residues 1186–1210 (IVEHSWFESFIVLMILLSSGALAFE). At 1211–1222 (DIYIEKKKTIKI) the chain is on the extracellular side. Residues 1223-1248 (ILEYADKIFTYIFILEMLLKWVAYGY) traverse the membrane as a helical segment. Residues 1249 to 1250 (KT) lie on the Cytoplasmic side of the membrane. Residues 1251–1276 (YFTNAWCWLDFLIVDVSLVTLVANTL) form a helical membrane-spanning segment. At 1277 to 1285 (GYSDLGPIK) the chain is on the extracellular side. A helical transmembrane segment spans residues 1286–1302 (SLRTLRALRPLRALSRF). Residues 1303 to 1315 (EGMRVVVNALIGA) are Cytoplasmic-facing. The chain crosses the membrane as a helical span at residues 1316–1340 (IPSIMNVLLVCLIFWLIFSIMGVNL). The Extracellular segment spans residues 1341-1392 (FAGKFYECVNTTDGSRFPTSQVANRSECFALMNVSGNVRWKNLKVNFDNVGL). A disulfide bridge connects residues Cys-1348 and Cys-1368. Asn-1350, Asn-1364, and Asn-1373 each carry an N-linked (GlcNAc...) asparagine glycan. Residues 1393–1403 (GYLSLLQVATF) constitute an intramembrane region (pore-forming). Topologically, residues 1404–1429 (KGWMDIMYAAVDSVNVNEQPKYEYSL) are extracellular. A helical transmembrane segment spans residues 1430 to 1455 (YMYIYFVIFIIFGSFFTLNLFIGVII). At 1456–1512 (DNFNQQKKKLGGQDIFMTEEQKKYYNAMKKLGSKKPQKPIPRPGNKFQGCIFDLVTN) the chain is on the cytoplasmic side. Ser-1488 is modified (phosphoserine; by PKC). Residues 1495 to 1793 (IPRPGNKFQG…WEKFDPDATQ (299 aa)) form an IV repeat. The chain crosses the membrane as a helical span at residues 1513–1532 (QAFDITIMVLICLNMVTMMV). Over 1533–1543 (EKEGQTEYMDY) the chain is Extracellular. A helical membrane pass occupies residues 1544 to 1565 (VLHWINMVFIILFTGECVLKLI). The Cytoplasmic portion of the chain corresponds to 1566 to 1574 (SLRHYYFTV). A helical transmembrane segment spans residues 1575–1596 (GWNIFDFVVVILSIVGMFLAEM). The Extracellular segment spans residues 1597 to 1605 (IEKYFVSPT). Residues 1606 to 1625 (LFRVIRLARIGRILRLIKGA) traverse the membrane as a helical segment. Topologically, residues 1626–1638 (KGIRTLLFALMMS) are cytoplasmic. Residues 1639–1661 (LPALFNIGLLLFLVMFIYAIFGM) form a helical membrane-spanning segment. Residues 1662 to 1684 (SNFAYVKKEAGINDMFNFETFGN) lie on the Extracellular side of the membrane. An intramembrane region (pore-forming) is located at residues 1685-1697 (SMICLFQITTSAG). Residues 1698–1731 (WDGLLAPILNSAPPDCDPKKVHPGSSVEGDCGNP) lie on the Extracellular side of the membrane. An intrachain disulfide couples Cys-1713 to Cys-1728. Residues 1732 to 1757 (SVGIFYFVSYIIISFLVVVNMYIAVI) traverse the membrane as a helical segment. Residues 1758-1984 (LENFSVATEE…EDKEKDESRK (227 aa)) lie on the Cytoplasmic side of the membrane. Residues 1887–1916 (EEVSATIIQRAYRRYRLRQHVKNISSIYIK) enclose the IQ domain. Over residues 1916-1930 (KDGDRDDDLPNKEDT) the composition is skewed to basic and acidic residues. The disordered stretch occupies residues 1916–1984 (KDGDRDDDLP…EDKEKDESRK (69 aa)). The span at 1946–1958 (VTASTISPPSYDS) shows a compositional bias: polar residues. A compositionally biased stretch (basic and acidic residues) spans 1960 to 1984 (TKPDQEKYETDKTEKEDKEKDESRK).

It belongs to the sodium channel (TC 1.A.1.10) family. Nav1.7/SCN9A subfamily. As to quaternary structure, the Nav1.7 voltage-gated sodium channel consists of an ion-conducting alpha subunit SCN9A which is functional on its own regulated by one or more beta-1 (SCN1B), beta-2 (SCN2B), beta-3 (SCN3B) and beta-4 (SCN4B) subunits. SCN1B and SCN3B are non-covalently associated with SCN9A. SCN2B and SCN4B are disulfide-linked to SCN9A. SCN1B regulates channel inactivation. Interacts with NEDD4 and NEDD4L; regulates Nav1.7 activity most probably through ubiquitination and subsequent endocytosis. Interacts with TMEM233; modulates the gating properties of NaV1.7. Post-translationally, phosphorylation at Ser-1488 by PKC in a highly conserved cytoplasmic loop increases peak sodium currents. In terms of processing, ubiquitinated by NEDD4L; which may promote its endocytosis. Does not seem to be ubiquitinated by NEDD4. Ubiquitinated by NEDD4L; which may promote its endocytosis. In terms of tissue distribution, expressed at high level in the dorsal root ganglion and at much lower levels in the brain, sciatic nerve, nodose ganglia, heart, thyroid and adrenal glands and Schwann cells, but not in the cardiac and skeletal muscles, brain and liver.

It localises to the cell membrane. The protein resides in the cell projection. Its subcellular location is the neuron projection. It is found in the axon. It carries out the reaction Na(+)(in) = Na(+)(out). With respect to regulation, inhibited by the conotoxin GVIIJ. Functionally, pore-forming subunit of Nav1.7, a voltage-gated sodium (Nav) channel that directly mediates the depolarizing phase of action potentials in excitable membranes. Navs, also called VGSCs (voltage-gated sodium channels) or VDSCs (voltage-dependent sodium channels), operate by switching between closed and open conformations depending on the voltage difference across the membrane. In the open conformation they allow Na(+) ions to selectively pass through the pore, along their electrochemical gradient. The influx of Na(+) ions provokes membrane depolarization, initiating the propagation of electrical signals throughout cells and tissues. Nav1.7 plays a crucial role in controlling the excitability and action potential propagation from nociceptor neurons, thereby contributing to the sensory perception of pain. This is Sodium channel protein type 9 subunit alpha from Rattus norvegicus (Rat).